Consider the following 422-residue polypeptide: Glutamyl-tRNA reductase (422 aa).

Residues 49–52 (TCNR), serine 110, 115–117 (EPQ), and glutamine 121 contribute to the substrate site. Cysteine 50 serves as the catalytic Nucleophile. 190–195 (GAGETI) provides a ligand contact to NADP(+).

Belongs to the glutamyl-tRNA reductase family. Homodimer.

The enzyme catalyses (S)-4-amino-5-oxopentanoate + tRNA(Glu) + NADP(+) = L-glutamyl-tRNA(Glu) + NADPH + H(+). It functions in the pathway porphyrin-containing compound metabolism; protoporphyrin-IX biosynthesis; 5-aminolevulinate from L-glutamyl-tRNA(Glu): step 1/2. Catalyzes the NADPH-dependent reduction of glutamyl-tRNA(Glu) to glutamate 1-semialdehyde (GSA). The chain is Glutamyl-tRNA reductase from Colwellia psychrerythraea (strain 34H / ATCC BAA-681) (Vibrio psychroerythus).